We begin with the raw amino-acid sequence, 284 residues long: Bifunctional protein FolD (284 aa).

NADP(+) contacts are provided by residues 165–167 (GRS), Ser190, and Ile231.

The protein belongs to the tetrahydrofolate dehydrogenase/cyclohydrolase family. Homodimer.

It carries out the reaction (6R)-5,10-methylene-5,6,7,8-tetrahydrofolate + NADP(+) = (6R)-5,10-methenyltetrahydrofolate + NADPH. The enzyme catalyses (6R)-5,10-methenyltetrahydrofolate + H2O = (6R)-10-formyltetrahydrofolate + H(+). Its pathway is one-carbon metabolism; tetrahydrofolate interconversion. In terms of biological role, catalyzes the oxidation of 5,10-methylenetetrahydrofolate to 5,10-methenyltetrahydrofolate and then the hydrolysis of 5,10-methenyltetrahydrofolate to 10-formyltetrahydrofolate. This Dechloromonas aromatica (strain RCB) protein is Bifunctional protein FolD.